A 308-amino-acid polypeptide reads, in one-letter code: HPr kinase/phosphorylase (308 aa).

Residues histidine 138 and lysine 159 contribute to the active site. ATP is bound at residue 153-160 (GESGLGKS). Serine 160 contacts Mg(2+). Residue aspartate 177 is the Proton acceptor; for phosphorylation activity. Proton donor; for dephosphorylation activity of the active site. The important for the catalytic mechanism of both phosphorylation and dephosphorylation stretch occupies residues 201–210 (LEVRGLGLLD). Glutamate 202 is a Mg(2+) binding site. Residue arginine 243 is part of the active site. The tract at residues 264–269 (QVAAGR) is important for the catalytic mechanism of dephosphorylation.

The protein belongs to the HPrK/P family. As to quaternary structure, homohexamer. Requires Mg(2+) as cofactor.

It catalyses the reaction [HPr protein]-L-serine + ATP = [HPr protein]-O-phospho-L-serine + ADP + H(+). It carries out the reaction [HPr protein]-O-phospho-L-serine + phosphate + H(+) = [HPr protein]-L-serine + diphosphate. In terms of biological role, catalyzes the ATP- as well as the pyrophosphate-dependent phosphorylation of a specific serine residue in HPr, a phosphocarrier protein of the phosphoenolpyruvate-dependent sugar phosphotransferase system (PTS). HprK/P also catalyzes the pyrophosphate-producing, inorganic phosphate-dependent dephosphorylation (phosphorolysis) of seryl-phosphorylated HPr (P-Ser-HPr). The protein is HPr kinase/phosphorylase of Bordetella pertussis (strain Tohama I / ATCC BAA-589 / NCTC 13251).